The primary structure comprises 37 residues: Calcitonin gene-related peptide 1 (37 aa).

Cysteines 2 and 7 form a disulfide. Phenylalanine 37 bears the Phenylalanine amide mark.

Belongs to the calcitonin family.

The protein resides in the secreted. In terms of biological role, CGRP1/CALCA is a peptide hormone that induces vasodilation mediated by the CALCRL-RAMP1 receptor complex. Dilates a variety of vessels including the coronary, cerebral and systemic vasculature. Its abundance in the CNS also points toward a neurotransmitter or neuromodulator role. It also elevates platelet cAMP. CGRP1 can also bind and activate CALCR-RAMP1 (AMYR1) receptor complex. The sequence is that of Calcitonin gene-related peptide 1 (CALCA) from Sus scrofa (Pig).